The following is a 571-amino-acid chain: Dehydrocurvularin exporter (571 aa).

The tract at residues 1-34 (MADGSDLENNHKPELDRSQPGSTSNGSQEQKDPD) is disordered. A compositionally biased stretch (basic and acidic residues) spans 8–17 (ENNHKPELDR). The span at 19-28 (QPGSTSNGSQ) shows a compositional bias: polar residues. N-linked (GlcNAc...) asparagine glycosylation is present at Asn25. 14 helical membrane-spanning segments follow: residues 47–67 (ILVM…IGII), 86–106 (WYGS…GKLF), 120–140 (FIFL…SVII), 143–163 (AIQG…INYV), 171–191 (LLIG…PVIG), 202–222 (WCFW…LLFL), 238–258 (IILA…VCLT), 275–295 (VIAT…TEWF), 317–337 (LFCL…PIYF), 350–370 (VNTL…GGVI), 379–399 (FELL…ILDV), 405–425 (MYIG…QIPM), 443–463 (IMVM…QSLF), and 514–534 (VFAF…IIPF). Positions 538–571 (PDHGKKDKPATEEAAEEKSEAEGKVSGDKEENHS) are disordered.

Belongs to the major facilitator superfamily. TCR/Tet family.

The protein localises to the cell membrane. In terms of biological role, efflux pump that is probably involved in the export of dehydrocurvularin. The chain is Dehydrocurvularin exporter from Aspergillus terreus.